A 517-amino-acid chain; its full sequence is Protein AGENET DOMAIN (AGD)-CONTAINING P1 (517 aa).

A disordered region spans residues 1–35 (MLRPRRSLGVSSPAKQRKKAAPKNSMATRANRKRL). 2 plant Agenet, chromatin-binding regions span residues 37-111 (SYLK…PPMS) and 117-173 (KKIV…EWVD). Residues 177–202 (KPPLEETEEEEDESEEDKLDDSEDEE) are disordered. Over residues 181–202 (EETEEEEDESEEDKLDDSEDEE) the composition is skewed to acidic residues. 4 plant Agenet, chromatin-binding regions span residues 219-287 (QMFS…PRDE), 289-345 (IDFA…DWVD), 378-446 (QAFS…LESV), and 449-505 (SPFE…EWID).

As to expression, expressed ubiquitously during vegetative stage, in meristems (e.g. root tips and shoot apical meristem), and in ovules and young seeds during reproductive stage.

It localises to the nucleus. Its function is as follows. Heterochromatin-binding protein that preferentially occupies long transposons and specifically recognizes the histone H3 'Lys-9' methylation (H3K9me) marks, with a stronger affinity for dimethylated H3K9 (H3K9me2). Required for transcriptional silencing, non-CG DNA methylation (e.g. CHG and CHH regions), and H3K9 dimethylation (H3K9me2) at some loci. Mediates heterochromatin phase separation and chromocenter formation. This is Protein AGENET DOMAIN (AGD)-CONTAINING P1 from Arabidopsis thaliana (Mouse-ear cress).